The following is a 230-amino-acid chain: 5'-methylthioadenosine/S-adenosylhomocysteine nucleosidase (230 aa).

E12 serves as the catalytic Proton acceptor. Residues G78, M153, and 174–175 (ME) contribute to the substrate site. The Proton donor role is filled by D198.

Belongs to the PNP/UDP phosphorylase family. MtnN subfamily.

It carries out the reaction S-adenosyl-L-homocysteine + H2O = S-(5-deoxy-D-ribos-5-yl)-L-homocysteine + adenine. The catalysed reaction is S-methyl-5'-thioadenosine + H2O = 5-(methylsulfanyl)-D-ribose + adenine. It catalyses the reaction 5'-deoxyadenosine + H2O = 5-deoxy-D-ribose + adenine. It participates in amino-acid biosynthesis; L-methionine biosynthesis via salvage pathway; S-methyl-5-thio-alpha-D-ribose 1-phosphate from S-methyl-5'-thioadenosine (hydrolase route): step 1/2. Functionally, catalyzes the irreversible cleavage of the glycosidic bond in both 5'-methylthioadenosine (MTA) and S-adenosylhomocysteine (SAH/AdoHcy) to adenine and the corresponding thioribose, 5'-methylthioribose and S-ribosylhomocysteine, respectively. Also cleaves 5'-deoxyadenosine, a toxic by-product of radical S-adenosylmethionine (SAM) enzymes, into 5-deoxyribose and adenine. In Lysinibacillus sphaericus (strain C3-41), this protein is 5'-methylthioadenosine/S-adenosylhomocysteine nucleosidase.